Reading from the N-terminus, the 221-residue chain is ATP phosphoribosyltransferase (221 aa).

This sequence belongs to the ATP phosphoribosyltransferase family. Short subfamily. Heteromultimer composed of HisG and HisZ subunits.

The protein localises to the cytoplasm. The enzyme catalyses 1-(5-phospho-beta-D-ribosyl)-ATP + diphosphate = 5-phospho-alpha-D-ribose 1-diphosphate + ATP. It participates in amino-acid biosynthesis; L-histidine biosynthesis; L-histidine from 5-phospho-alpha-D-ribose 1-diphosphate: step 1/9. In terms of biological role, catalyzes the condensation of ATP and 5-phosphoribose 1-diphosphate to form N'-(5'-phosphoribosyl)-ATP (PR-ATP). Has a crucial role in the pathway because the rate of histidine biosynthesis seems to be controlled primarily by regulation of HisG enzymatic activity. This chain is ATP phosphoribosyltransferase, found in Anaeromyxobacter dehalogenans (strain 2CP-C).